The following is a 264-amino-acid chain: Segregation and condensation protein A (264 aa).

Belongs to the ScpA family. Component of a cohesin-like complex composed of ScpA, ScpB and the Smc homodimer, in which ScpA and ScpB bind to the head domain of Smc. The presence of the three proteins is required for the association of the complex with DNA.

Its subcellular location is the cytoplasm. In terms of biological role, participates in chromosomal partition during cell division. May act via the formation of a condensin-like complex containing Smc and ScpB that pull DNA away from mid-cell into both cell halves. The chain is Segregation and condensation protein A from Enterococcus faecalis (strain ATCC 700802 / V583).